Reading from the N-terminus, the 190-residue chain is Xanthine phosphoribosyltransferase (190 aa).

Xanthine contacts are provided by Leu20 and Asn27. A 5-phospho-alpha-D-ribose 1-diphosphate-binding site is contributed by 128–132 (ANGKA). Lys156 contacts xanthine.

Belongs to the purine/pyrimidine phosphoribosyltransferase family. Xpt subfamily. Homodimer.

It localises to the cytoplasm. It catalyses the reaction XMP + diphosphate = xanthine + 5-phospho-alpha-D-ribose 1-diphosphate. It functions in the pathway purine metabolism; XMP biosynthesis via salvage pathway; XMP from xanthine: step 1/1. In terms of biological role, converts the preformed base xanthine, a product of nucleic acid breakdown, to xanthosine 5'-monophosphate (XMP), so it can be reused for RNA or DNA synthesis. The polypeptide is Xanthine phosphoribosyltransferase (Pseudomonas entomophila (strain L48)).